The sequence spans 766 residues: MASDTPESLMALCTDFCLRNLDGTLGYLLDKETLRLHPDIFLPSEICDRLVNEYVELVNAACNFEPHESFFSLFSDPRSTRLTRIHLREDLVQDQDLEAIRKQDLVELYLTNCEKLSAKSLQTLRSFSHTLVSLSLFGCTNIFYEEENPGGCEDEYLVNPTCQVLVKDFTFEGFSRLRFLNLGRMIDWVPVESLLRPLNSLAALDLSGIQTSDAAFLTQWKDSLVSLVLYNMDLSDDHIRVIVQLHKLRHLDISRDRLSSYYKFKLTREVLSLFVQKLGNLMSLDISGHMILENCSISKMEEEAGQTSIEPSKSSIIPFRALKRPLQFLGLFENSLCRLTHIPAYKVSGDKNEEQVLNAIEAYTEHRPEITSRAINLLFDIARIERCNQLLRALKLVITALKCHKYDRNIQVTGSAALFYLTNSEYRSEQSVKLRRQVIQVVLNGMESYQEVTVQRNCCLTLCNFGIPEELEFQYRRVNELLLSILNPTRQDESIQRIAVHLCNALVCQVDNDHKEAVGKMGFVVTMLKLIQKKLLDKICDQVMEFSWSALWNITDETPDNCEMFLNFNGMKLFLDCLKEFPEKQELHRNMLGLLGNVAEVKELRPQLMTSQFISVFSNLLESKADGIEVSYNACGVLSHIMFDGPEAWGVCEPQREEVEERMWAAIQSWDINSRRNINYRSFEPILRLLPQGISPVSQHWATWALYNLVSVYPDKYCPLLIKEGGMPLLRDIIKMATARQETKEMARKVIEHCSNFKEENMDTSR.

An N-acetylalanine modification is found at Ala-2. 3 LRR repeats span residues 226–245, 246–268, and 278–302; these read SLVL…IVQL, HKLR…KLTR, and LGNL…KMEE. 5 ARM repeats span residues 427 to 467, 511 to 556, 558 to 600, 602 to 643, and 714 to 756; these read RSEQ…NFGI, DNDH…NITD, TPDN…NVAE, KELR…HIMF, and PDKY…HCSN.

This sequence belongs to the zyg-11 family. In terms of assembly, interacts with the ELOC-ELOB/Elongin BC complex. Part of an E3 ubiquitin ligase complex including ZER1, CUL2 and Elongin BC.

In terms of biological role, serves as substrate adapter subunit in the E3 ubiquitin ligase complex ZYG11B-CUL2-Elongin BC. Acts redudantly with ZYG11B to target substrates bearing N-terminal glycine degrons for proteasomal degradation. Involved in the clearance of proteolytic fragments generated by caspase cleavage during apoptosis since N-terminal glycine degrons are strongly enriched at caspase cleavage sites. Also important in the quality control of protein N-myristoylation in which N-terminal glycine degrons are conditionally exposed after a failure of N-myristoylation. The protein is Protein zer-1 homolog (ZER1) of Pongo abelii (Sumatran orangutan).